Here is a 127-residue protein sequence, read N- to C-terminus: Cold-regulated protein 1 (127 aa).

Residues 39–127 are disordered; sequence ARGPPPSPAP…WTRPRMARAR (89 aa). Positions 85–101 are enriched in basic residues; sequence SRRRRRRRATRRARSRM. Residues 102 to 121 are compositionally biased toward low complexity; it reads PRTTPWRAPRAPARAWWTRP.

The polypeptide is Cold-regulated protein 1 (Hordeum vulgare (Barley)).